The chain runs to 128 residues: Large ribosomal subunit protein bL19 (128 aa).

It belongs to the bacterial ribosomal protein bL19 family.

Functionally, this protein is located at the 30S-50S ribosomal subunit interface and may play a role in the structure and function of the aminoacyl-tRNA binding site. This chain is Large ribosomal subunit protein bL19, found in Aromatoleum aromaticum (strain DSM 19018 / LMG 30748 / EbN1) (Azoarcus sp. (strain EbN1)).